We begin with the raw amino-acid sequence, 427 residues long: Glutamate-1-semialdehyde 2,1-aminomutase (427 aa).

Lys264 is subject to N6-(pyridoxal phosphate)lysine.

Belongs to the class-III pyridoxal-phosphate-dependent aminotransferase family. HemL subfamily. Homodimer. Pyridoxal 5'-phosphate serves as cofactor.

It localises to the cytoplasm. It carries out the reaction (S)-4-amino-5-oxopentanoate = 5-aminolevulinate. It participates in porphyrin-containing compound metabolism; protoporphyrin-IX biosynthesis; 5-aminolevulinate from L-glutamyl-tRNA(Glu): step 2/2. This chain is Glutamate-1-semialdehyde 2,1-aminomutase, found in Campylobacter concisus (strain 13826).